Reading from the N-terminus, the 190-residue chain is MGGTFDPVHNGHLVAASEVAALFDLDEVVFVPSGQPWQKIHRKVSAAEDRYLMTFLATAGNPQFTVSRIEIDRGGATYTIDTLRDLRAARPDDELFFITGADALAQIFTWRDHRELFELAHFVGVNRPGYHLALDAGLPTGAVSLLEVPALAISSSDIRERVGRRAPIWYLTPDGVVRYIAKRRLYQGAS.

Belongs to the NadD family.

It carries out the reaction nicotinate beta-D-ribonucleotide + ATP + H(+) = deamido-NAD(+) + diphosphate. Its pathway is cofactor biosynthesis; NAD(+) biosynthesis; deamido-NAD(+) from nicotinate D-ribonucleotide: step 1/1. Its function is as follows. Catalyzes the reversible adenylation of nicotinate mononucleotide (NaMN) to nicotinic acid adenine dinucleotide (NaAD). This chain is Probable nicotinate-nucleotide adenylyltransferase, found in Frankia casuarinae (strain DSM 45818 / CECT 9043 / HFP020203 / CcI3).